Reading from the N-terminus, the 42-residue chain is Photosystem I reaction center subunit IX (42 aa).

A helical transmembrane segment spans residues tyrosine 7–isoleucine 27.

This sequence belongs to the PsaJ family.

The protein resides in the plastid. Its subcellular location is the chloroplast thylakoid membrane. May help in the organization of the PsaE and PsaF subunits. In Guizotia abyssinica (Niger), this protein is Photosystem I reaction center subunit IX.